Consider the following 273-residue polypeptide: Tyrosinase (273 aa).

A signal peptide spans 1 to 18; that stretch reads MLLFTMGLLLAILQPSTG. Asn86, Asn111, and Asn161 each carry an N-linked (GlcNAc...) asparagine glycan. Cu cation-binding residues include His180, His202, and His211. The N-linked (GlcNAc...) asparagine glycan is linked to Asn230.

The protein belongs to the tyrosinase family. Requires Cu(2+) as cofactor.

The protein localises to the melanosome membrane. The protein resides in the melanosome. The catalysed reaction is 2 L-dopa + O2 = 2 L-dopaquinone + 2 H2O. The enzyme catalyses L-tyrosine + O2 = L-dopaquinone + H2O. Its function is as follows. This is a copper-containing oxidase that functions in the formation of pigments such as melanins and other polyphenolic compounds. Catalyzes the initial and rate limiting step in the cascade of reactions leading to melanin production from tyrosine. In addition to hydroxylating tyrosine to DOPA (3,4-dihydroxyphenylalanine), also catalyzes the oxidation of DOPA to DOPA-quinone, and possibly the oxidation of DHI (5,6-dihydroxyindole) to indole-5,6 quinone. This is Tyrosinase (TYR) from Coturnix japonica (Japanese quail).